A 517-amino-acid polypeptide reads, in one-letter code: Amidophosphoribosyltransferase (517 aa).

M1 carries the post-translational modification N-acetylmethionine. A propeptide spanning residues 1 to 11 (MELEELGIREE) is cleaved from the precursor. C12 functions as the Nucleophile in the catalytic mechanism. A Glutamine amidotransferase type-2 domain is found at 12–261 (CGVFGCIASG…PGEIVEISRH (250 aa)). C280 is a [4Fe-4S] cluster binding site. Residues S327, D389, and D390 each coordinate Mg(2+). Residues C426, C503, and C506 each coordinate [4Fe-4S] cluster.

The protein in the C-terminal section; belongs to the purine/pyrimidine phosphoribosyltransferase family. Homotetramer. It depends on Mg(2+) as a cofactor. Requires [4Fe-4S] cluster as cofactor.

The enzyme catalyses 5-phospho-beta-D-ribosylamine + L-glutamate + diphosphate = 5-phospho-alpha-D-ribose 1-diphosphate + L-glutamine + H2O. Its pathway is purine metabolism; IMP biosynthesis via de novo pathway; N(1)-(5-phospho-D-ribosyl)glycinamide from 5-phospho-alpha-D-ribose 1-diphosphate: step 1/2. Catalyzes the formation of phosphoribosylamine from phosphoribosylpyrophosphate (PRPP) and glutamine. This chain is Amidophosphoribosyltransferase, found in Mus musculus (Mouse).